Here is a 417-residue protein sequence, read N- to C-terminus: Serine hydroxymethyltransferase (417 aa).

(6S)-5,6,7,8-tetrahydrofolate contacts are provided by residues L121 and 125–127 (GHL). The residue at position 229 (K229) is an N6-(pyridoxal phosphate)lysine. Residue 355-357 (SPF) coordinates (6S)-5,6,7,8-tetrahydrofolate.

It belongs to the SHMT family. In terms of assembly, homodimer. Requires pyridoxal 5'-phosphate as cofactor.

The protein localises to the cytoplasm. The enzyme catalyses (6R)-5,10-methylene-5,6,7,8-tetrahydrofolate + glycine + H2O = (6S)-5,6,7,8-tetrahydrofolate + L-serine. The protein operates within one-carbon metabolism; tetrahydrofolate interconversion. Its pathway is amino-acid biosynthesis; glycine biosynthesis; glycine from L-serine: step 1/1. Its function is as follows. Catalyzes the reversible interconversion of serine and glycine with tetrahydrofolate (THF) serving as the one-carbon carrier. This reaction serves as the major source of one-carbon groups required for the biosynthesis of purines, thymidylate, methionine, and other important biomolecules. Also exhibits THF-independent aldolase activity toward beta-hydroxyamino acids, producing glycine and aldehydes, via a retro-aldol mechanism. The protein is Serine hydroxymethyltransferase of Buchnera aphidicola subsp. Acyrthosiphon pisum (strain 5A).